The following is a 214-amino-acid chain: Ribonuclease HII (214 aa).

The RNase H type-2 domain maps to 26–214; that stretch reads EIVCGVDEAG…PVRAALDLIR (189 aa). A divalent metal cation is bound by residues Asp32, Glu33, and Asp124.

Belongs to the RNase HII family. Mn(2+) serves as cofactor. The cofactor is Mg(2+).

The protein resides in the cytoplasm. It catalyses the reaction Endonucleolytic cleavage to 5'-phosphomonoester.. Endonuclease that specifically degrades the RNA of RNA-DNA hybrids. The sequence is that of Ribonuclease HII from Burkholderia cenocepacia (strain HI2424).